A 312-amino-acid polypeptide reads, in one-letter code: DNA-directed RNA polymerase subunit alpha (312 aa).

An alpha N-terminal domain (alpha-NTD) region spans residues 1–226 (MIEFEKPNIT…EHFKVFMSTD (226 aa)). Residues 243 to 312 (NEKKLEMTIE…DLGLSLRQDD (70 aa)) are alpha C-terminal domain (alpha-CTD).

Belongs to the RNA polymerase alpha chain family. Homodimer. The RNAP catalytic core consists of 2 alpha, 1 beta, 1 beta' and 1 omega subunit. When a sigma factor is associated with the core the holoenzyme is formed, which can initiate transcription.

It carries out the reaction RNA(n) + a ribonucleoside 5'-triphosphate = RNA(n+1) + diphosphate. DNA-dependent RNA polymerase catalyzes the transcription of DNA into RNA using the four ribonucleoside triphosphates as substrates. The protein is DNA-directed RNA polymerase subunit alpha of Lactobacillus johnsonii (strain CNCM I-12250 / La1 / NCC 533).